Here is a 401-residue protein sequence, read N- to C-terminus: S-adenosylmethionine synthase (401 aa).

H15 provides a ligand contact to ATP. D17 lines the Mg(2+) pocket. A K(+)-binding site is contributed by E48. L-methionine contacts are provided by E61 and Q104. Positions 104-114 (QSPDIALGVDR) are flexible loop. ATP contacts are provided by residues 179–181 (DGK), 246–247 (RF), D255, 261–262 (RK), A278, and K282. D255 provides a ligand contact to L-methionine. K286 contacts L-methionine.

The protein belongs to the AdoMet synthase family. In terms of assembly, homotetramer; dimer of dimers. Mg(2+) is required as a cofactor. Requires K(+) as cofactor.

The protein resides in the cytoplasm. It catalyses the reaction L-methionine + ATP + H2O = S-adenosyl-L-methionine + phosphate + diphosphate. It participates in amino-acid biosynthesis; S-adenosyl-L-methionine biosynthesis; S-adenosyl-L-methionine from L-methionine: step 1/1. Functionally, catalyzes the formation of S-adenosylmethionine (AdoMet) from methionine and ATP. The overall synthetic reaction is composed of two sequential steps, AdoMet formation and the subsequent tripolyphosphate hydrolysis which occurs prior to release of AdoMet from the enzyme. This Petrotoga mobilis (strain DSM 10674 / SJ95) protein is S-adenosylmethionine synthase.